The chain runs to 1167 residues: C5a peptidase (1167 aa).

Residues 1-31 (MRKKQKLPFDKLAIALMSTSILLNAQSDIKA) form the signal peptide. Residues 34–52 (VTEDTPVTEQAVETPQPTA) show a composition bias toward polar residues. Positions 34-73 (VTEDTPVTEQAVETPQPTAVSEEVPSSKETKTPQTPDDAE) are disordered. The Peptidase S8 domain occupies 99–581 (KATIRDLNDP…AGAVDAKKAS (483 aa)). Residues Asp130, His193, and Ser512 each act as charge relay system in the active site. The disordered stretch occupies residues 1029-1133 (EGHSNKPEQD…RDQLPTTNDK (105 aa)). 4 tandem repeats follow at residues 1034 to 1050 (KPEQ…KPEA), 1051 to 1067 (KPEQ…KPEA), 1068 to 1084 (KPEQ…KPET), and 1085 to 1101 (KPEK…TPQK). The segment at 1034–1101 (KPEQDGSGQT…GQTPGKTPQK (68 aa)) is 4 X 17 AA tandem repeats. Basic and acidic residues-rich tracts occupy residues 1044-1071 (PDKK…KPEQ) and 1078-1090 (PDKK…EKDS). Polar residues-rich tracts occupy residues 1092–1106 (GQTP…QPSR) and 1120–1130 (KASTRDQLPTT). The LPXTG sorting signal motif lies at 1127 to 1131 (LPTTN). At Thr1130 the chain carries Pentaglycyl murein peptidoglycan amidated threonine. Residues 1131-1167 (NDKDTNRLHLLKLVMTTFFFGLVAHIFKTKRQKETKK) constitute a propeptide, removed by sortase.

The protein belongs to the peptidase S8 family. In terms of processing, cleaved by SpeB protease; leading to its degradation. Degradation by SpeB is probably strictly regulated to preserve integrity of C5a peptidase.

It is found in the secreted. The protein resides in the cell wall. It catalyses the reaction The primary cleavage site is at 67-His-|-Lys-68 in human C5a with a minor secondary cleavage site at 58-Ala-|-Ser-59.. In terms of biological role, this virulence factor of S.pyogenes specifically cleaves the human serum chemotaxin C5a at '68-Lys-|-Asp-69' bond near its C-terminus, destroying its ability to serve as a chemoattractant. In Streptococcus pyogenes, this protein is C5a peptidase (scpA).